A 131-amino-acid chain; its full sequence is Small ribosomal subunit protein uS8 (131 aa).

It belongs to the universal ribosomal protein uS8 family. In terms of assembly, part of the 30S ribosomal subunit. Contacts proteins S5 and S12.

Functionally, one of the primary rRNA binding proteins, it binds directly to 16S rRNA central domain where it helps coordinate assembly of the platform of the 30S subunit. The protein is Small ribosomal subunit protein uS8 of Legionella pneumophila subsp. pneumophila (strain Philadelphia 1 / ATCC 33152 / DSM 7513).